We begin with the raw amino-acid sequence, 391 residues long: MKLSIALALGATASTGVLAAVVPQQEPLITPQDPPTHHHQEKFLIELAPYQTRWVTEEEKWDLKLDGVNFIDITEERNTGFYPTLHAGSYVHYPPTMKHAEKVVPLLRGLSKDNMEQNLNKFTSFHTRYYRSSTGIESAKWLYSRVSDVIEQSGAAEYGATVEQFAHSWGQFSIIARIPGQTNKTVVLGAHQDSINLFLPSILAAPGADDDGSGTVTILEALRGLLQSDAIVRGNASNTIEFHWYSAEEGGMLGSQAIFSQYKRDKRDIKAMLQQDMTGYTQGALDAGRQEAIGIMVDYVDEGLTQFLKDVTTEYCGIGYIETRCGYACSDHTSASKYGYPAAMATESEMENSNKRIHTTDDSIRYLSFDHMLEHARLTLGFAYELAFAQF.

The first 19 residues, 1–19 (MKLSIALALGATASTGVLA), serve as a signal peptide directing secretion. Residues 20–91 (AVVPQQEPLI…YPTLHAGSYV (72 aa)) constitute a propeptide that is removed on maturation. N-linked (GlcNAc...) asparagine glycosylation is present at Asn183. Residues His191 and Asp210 each contribute to the Zn(2+) site. Asn235 is a glycosylation site (N-linked (GlcNAc...) asparagine). Residues Glu249 and Asp276 each contribute to the Zn(2+) site. Cysteines 325 and 329 form a disulfide. His358 provides a ligand contact to Zn(2+).

Belongs to the peptidase M28 family. M28E subfamily. As to quaternary structure, monomer. It depends on Zn(2+) as a cofactor.

It is found in the secreted. Extracellular aminopeptidase that allows assimilation of proteinaceous substrates. The polypeptide is Leucine aminopeptidase 1 (lap1) (Aspergillus niger (strain ATCC MYA-4892 / CBS 513.88 / FGSC A1513)).